The chain runs to 175 residues: ATP synthase subunit b (175 aa).

A helical membrane pass occupies residues 22 to 44; sequence MLVQLFFFLILLALLKKFAWGPL.

This sequence belongs to the ATPase B chain family. F-type ATPases have 2 components, F(1) - the catalytic core - and F(0) - the membrane proton channel. F(1) has five subunits: alpha(3), beta(3), gamma(1), delta(1), epsilon(1). F(0) has three main subunits: a(1), b(2) and c(10-14). The alpha and beta chains form an alternating ring which encloses part of the gamma chain. F(1) is attached to F(0) by a central stalk formed by the gamma and epsilon chains, while a peripheral stalk is formed by the delta and b chains.

Its subcellular location is the cell membrane. Its function is as follows. F(1)F(0) ATP synthase produces ATP from ADP in the presence of a proton or sodium gradient. F-type ATPases consist of two structural domains, F(1) containing the extramembraneous catalytic core and F(0) containing the membrane proton channel, linked together by a central stalk and a peripheral stalk. During catalysis, ATP synthesis in the catalytic domain of F(1) is coupled via a rotary mechanism of the central stalk subunits to proton translocation. Functionally, component of the F(0) channel, it forms part of the peripheral stalk, linking F(1) to F(0). The sequence is that of ATP synthase subunit b from Oceanobacillus iheyensis (strain DSM 14371 / CIP 107618 / JCM 11309 / KCTC 3954 / HTE831).